Here is a 2631-residue protein sequence, read N- to C-terminus: Cyclic GMP-binding protein C (2631 aa).

LRR repeat units lie at residues 170 to 194 (TAQIDIEFHLSYTQLVTLPPSIFSL), 196 to 217 (WIQKLVLTHHNIKTLSEDIGKL), 218 to 240 (QQLQVLVLENNRLINLPQSIGDL), 242 to 262 (NLKRLEVDNNHLVSLCSLERL), 263 to 285 (SKLEVLSVNNNKLTLLPTSIASL), and 287 to 308 (SLKTLNIKSNPIITPPSTVVSK). Residues 323–515 (GARPCLRSKL…QLIEDIIKTQ (193 aa)) enclose the Roc domain. GTP-binding positions include 336 to 343 (GDPGVGKT), 402 to 406 (DIANQ), and 458 to 461 (THID). Residues 523–741 (PSSFFTLEEA…ESCQKRAVIL (219 aa)) form the COR domain. In terms of domain architecture, Protein kinase spans 878 to 1172 (VKINKEVGRG…KKKFAPLPFT (295 aa)). ATP-binding positions include 884-892 (VGRGAFGIV) and Lys905. Asp1023 acts as the Proton acceptor in catalysis. The span at 1225–1250 (ISLTSSGTSPTNSPVGGLLSQSLTQP) shows a compositional bias: polar residues. Disordered stretches follow at residues 1225–1263 (ISLTSSGTSPTNSPVGGLLSQSLTQPITSGGSTSGILST) and 1387–1418 (SSATLKSEHISTRRRSDTAGKNGVPPHWRNSV). The span at 1251–1263 (ITSGGSTSGILST) shows a compositional bias: low complexity. The N-terminal Ras-GEF domain maps to 1366-1539 (SVSIIIAATM…QIYGTLTTHE (174 aa)). Residues 1392–1404 (KSEHISTRRRSDT) show a composition bias toward basic and acidic residues. A DEP domain is found at 1620 to 1706 (PLLGITVKEK…SPTSFYMFLE (87 aa)). The 264-residue stretch at 1708–1971 (DPELIARQYT…DLKALDSLQI (264 aa)) folds into the Ras-GEF domain. The interval 1989–2013 (GTTNDDKEKGDENGGGLTSSNFFGN) is disordered. 2014 to 2133 (GSDELTERDW…AKFYKIMANQ (120 aa)) lines the a nucleoside 3',5'-cyclic phosphate pocket. Disordered stretches follow at residues 2142–2180 (PWSKPKNTTGGSSSSNQSAGPDNILGTTPTGISSSGGGL), 2192–2239 (MSLS…TTTD), and 2263–2346 (SANL…GQQP). Residues 2144–2174 (SKPKNTTGGSSSSNQSAGPDNILGTTPTGIS) show a composition bias toward low complexity. Positions 2212-2221 (LPSPPAPLQS) are enriched in pro residues. Residues 2222 to 2238 (PPTSGISSPTTTTSTTT) are compositionally biased toward low complexity. Over residues 2287 to 2299 (TINKDPHQRDSGS) the composition is skewed to basic and acidic residues. The segment covering 2321–2336 (GSISYLGRTQTSTSPL) has biased composition (polar residues). Residues 2354-2414 (EFCQRFALVD…KNIDKLICIN (61 aa)) enclose the GRAM domain. An a nucleoside 3',5'-cyclic phosphate-binding site is contributed by 2490-2616 (GDELTKEDWE…ASKWFKYLAT (127 aa)).

The protein belongs to the protein kinase superfamily. TKL Ser/Thr protein kinase family. ROCO subfamily.

The enzyme catalyses L-seryl-[protein] + ATP = O-phospho-L-seryl-[protein] + ADP + H(+). The catalysed reaction is L-threonyl-[protein] + ATP = O-phospho-L-threonyl-[protein] + ADP + H(+). Its function is as follows. Promotes the exchange of Ras-bound GDP by GTP. Required for cyclic GMP-mediated chemotaxis, polarity. Plays a key role in cyclic AMP-induced myosin II translocation to the cortex. Also involved in the phosphorylation of mlkA and mlcR, either directly or via an intermediate kinase. The sequence is that of Cyclic GMP-binding protein C (gbpC) from Dictyostelium discoideum (Social amoeba).